The chain runs to 467 residues: Ribosome biogenesis protein YTM1 (467 aa).

Positions 8–95 (IKIKFFTNEE…ETFLSLEYTR (88 aa)) are ubiquitin-like (UBL) domain. A sufficient for interaction with ERB1 and association with 66S pre-ribosomes region spans residues 105-467 (SFNNEDWISS…QINKGSDISK (363 aa)). WD repeat units follow at residues 120-159 (KTLP…EKQY), 161-199 (GHSG…GSIP), 216-255 (GHKA…MTTI), 293-333 (SHTQ…CIDT), 335-374 (STGY…NTTE), 382-422 (GHTN…SLYT), and 432-467 (KGAD…DISK).

Belongs to the WD repeat WDR12/YTM1 family. As to quaternary structure, component of the NOP7 complex, composed of ERB1, NOP7 and YTM1. The complex is held together by ERB1, which interacts with NOP7 via its N-terminal domain and with YTM1 via a high-affinity interaction between the seven-bladed beta-propeller domains of the 2 proteins. The NOP7 complex associates with the 66S pre-ribosome. Interacts (via UBL domain) with MDN1 (via VWFA/MIDAS domain).

It is found in the nucleus. It localises to the nucleolus. Its subcellular location is the nucleoplasm. Its function is as follows. Component of the NOP7 complex, which is required for maturation of the 25S and 5.8S ribosomal RNAs and formation of the 60S ribosome. This chain is Ribosome biogenesis protein YTM1, found in Scheffersomyces stipitis (strain ATCC 58785 / CBS 6054 / NBRC 10063 / NRRL Y-11545) (Yeast).